Reading from the N-terminus, the 650-residue chain is Methionine--tRNA ligase (650 aa).

The 'HIGH' region signature appears at Tyr11–His21. Zn(2+) contacts are provided by Cys126, Cys129, Cys147, and Cys150. A 'KMSKS' region motif is present at residues Lys301 to Ser305. Residue Lys304 coordinates ATP. A disordered region spans residues Glu513 to Glu535. Positions Asp549–Ser650 constitute a tRNA-binding domain.

Belongs to the class-I aminoacyl-tRNA synthetase family. MetG type 2A subfamily. Homodimer. Zn(2+) serves as cofactor.

It is found in the cytoplasm. It catalyses the reaction tRNA(Met) + L-methionine + ATP = L-methionyl-tRNA(Met) + AMP + diphosphate. Is required not only for elongation of protein synthesis but also for the initiation of all mRNA translation through initiator tRNA(fMet) aminoacylation. The sequence is that of Methionine--tRNA ligase (metG) from Helicobacter pylori (strain ATCC 700392 / 26695) (Campylobacter pylori).